Here is a 1892-residue protein sequence, read N- to C-terminus: Plexin A3 (1892 aa).

A signal peptide spans 1 to 20; that stretch reads MRSLWLLVFSFSVLTGTNMA. In terms of domain architecture, Sema spans 21–509; sequence FPMILSERPE…SDKQVSRLPV (489 aa). Over 21–1240 the chain is Extracellular; the sequence is FPMILSERPE…IYSDSTLTLP (1220 aa). N-linked (GlcNAc...) asparagine glycosylation occurs at Asn-68. Cystine bridges form between Cys-86–Cys-95, Cys-121–Cys-129, Cys-283–Cys-404, Cys-299–Cys-355, Cys-373–Cys-392, Cys-512–Cys-529, Cys-518–Cys-560, Cys-521–Cys-538, and Cys-532–Cys-544. Residue Asn-569 is glycosylated (N-linked (GlcNAc...) asparagine). An intrachain disulfide couples Cys-595 to Cys-615. IPT/TIG domains are found at residues 861-955, 957-1041, 1044-1143, and 1146-1232; these read PRIT…YSFV, PSFS…YIYT, PNIS…FTYY, and PTFE…LHIY. Residue Asn-1183 is glycosylated (N-linked (GlcNAc...) asparagine). Residues 1241–1261 traverse the membrane as a helical segment; that stretch reads AIIGIGAGGGVLLIAIIAVLI. Positions 1262–1315 form a coiled coil; it reads AYKRKTRDADRTLKRLQLQMDNLESRVALECKEAFAELQTDIQELTNDMDGVKI. At 1262 to 1892 the chain is on the cytoplasmic side; the sequence is AYKRKTRDAD…QAINLMSGSS (631 aa).

Belongs to the plexin family. Detected in primary motor neurons in the embryonic nervous system.

The protein localises to the cell membrane. In terms of biological role, coreceptor for class 3 semaphorins. Necessary for signaling by class 3 semaphorins and subsequent remodeling of the cytoskeleton. Plays a role in axon guidance in the developing nervous system. Class 3 semaphorins bind to a complex composed of a neuropilin and a plexin. The plexin modulates the affinity of the complex for specific semaphorins, and its cytoplasmic domain is required for the activation of down-stream signaling events in the cytoplasm. This chain is Plexin A3 (plxna3), found in Danio rerio (Zebrafish).